The primary structure comprises 294 residues: Syntaxin-19 (294 aa).

One can recognise a t-SNARE coiled-coil homology domain in the interval Leu209–Ala271.

This sequence belongs to the syntaxin family. Interacts with EGFR.

The protein resides in the cell membrane. It is found in the cytoplasm. Its function is as follows. Plays a role in endosomal trafficking of the epidermal growth factor receptor (EGFR). The sequence is that of Syntaxin-19 (STX19) from Pongo abelii (Sumatran orangutan).